Here is a 523-residue protein sequence, read N- to C-terminus: Glutamate--cysteine ligase, chloroplastic (523 aa).

C187 and C407 are joined by a disulfide.

Belongs to the carboxylate-amine ligase family. Glutamate--cysteine ligase type 2 subfamily. Homodimer or monomer when oxidized or reduced, respectively. The Cys-187-Cys-407 disulfide bridge is known to modulate the enzyme activity according to the redox status. The oxidized form constitutes the active enzyme.

The protein resides in the plastid. It localises to the chloroplast. The enzyme catalyses L-cysteine + L-glutamate + ATP = gamma-L-glutamyl-L-cysteine + ADP + phosphate + H(+). It functions in the pathway sulfur metabolism; glutathione biosynthesis; glutathione from L-cysteine and L-glutamate: step 1/2. This Solanum lycopersicum (Tomato) protein is Glutamate--cysteine ligase, chloroplastic (GSH1).